A 311-amino-acid chain; its full sequence is Apolipoprotein E (311 aa).

The N-terminal stretch at 1–18 (MKVWWAVLAAAILAGCRA) is a signal peptide. Tandem repeats lie at residues 74–95 (MLMEETMKEVKAYKSELEEQLS), 96–116 (PMAQEHRARLSKELQVAGALE), 117–138 (ADMEDVCNRLAQYRGEAQAMLG), 139–160 (QSTEELARAFSSHLRKLRKRLL), 161–182 (RDAEDLQKRMAVYGAGAREGAE), 183–204 (RGVSAVRERLGSRLERGRLRVA), 205–226 (TVGTLAGRPLRERAQAWGERLR), and 227–248 (GHLEEVGSRARDRLNEVREQVE). The segment at 74-248 (MLMEETMKEV…RLNEVREQVE (175 aa)) is 8 X 22 AA approximate tandem repeats. M136 carries the methionine sulfoxide modification. S140 is subject to Phosphoserine. Positions 151 to 161 (HLRKLRKRLLR) are LDL and other lipoprotein receptors binding. Residue 155-158 (LRKR) participates in heparin binding. The interval 203–283 (VATVGTLAGR…SWFEPLVEDM (81 aa)) is lipid-binding and lipoprotein association. T205 carries an O-linked (GalNAc...) threonine glycan. 222–229 (GERLRGHL) lines the heparin pocket. The homooligomerization stretch occupies residues 259–311 (PQMRLQAEAFQARLKSWFEPLVEDMQRQWAGLVEKLQAAMPSKAPAAAPIENQ). The specificity for association with VLDL stretch occupies residues 271–283 (RLKSWFEPLVEDM).

The protein belongs to the apolipoprotein A1/A4/E family. In terms of assembly, homotetramer. May interact with ABCA1; functionally associated with ABCA1 in the biogenesis of HDLs. May interact with APP/A4 amyloid-beta peptide; the interaction is extremely stable in vitro but its physiological significance is unclear. May interact with MAPT. May interact with MAP2. In the cerebrospinal fluid, interacts with secreted SORL1. Interacts with PMEL; this allows the loading of PMEL luminal fragment on ILVs to induce fibril nucleation. APOE exists as multiple glycosylated and sialylated glycoforms within cells and in plasma. The extent of glycosylation and sialylation are tissue and context specific. Post-translationally, glycated in plasma VLDL. In terms of processing, phosphorylated by FAM20C in the extracellular medium.

It is found in the secreted. The protein resides in the extracellular space. It localises to the extracellular matrix. The protein localises to the extracellular vesicle. Its subcellular location is the endosome. It is found in the multivesicular body. Functionally, APOE is an apolipoprotein, a protein associating with lipid particles, that mainly functions in lipoprotein-mediated lipid transport between organs via the plasma and interstitial fluids. APOE is a core component of plasma lipoproteins and is involved in their production, conversion and clearance. Apolipoproteins are amphipathic molecules that interact both with lipids of the lipoprotein particle core and the aqueous environment of the plasma. As such, APOE associates with chylomicrons, chylomicron remnants, very low density lipoproteins (VLDL) and intermediate density lipoproteins (IDL) but shows a preferential binding to high-density lipoproteins (HDL). It also binds a wide range of cellular receptors including the LDL receptor/LDLR and the very low-density lipoprotein receptor/VLDLR that mediate the cellular uptake of the APOE-containing lipoprotein particles. Finally, APOE also has a heparin-binding activity and binds heparan-sulfate proteoglycans on the surface of cells, a property that supports the capture and the receptor-mediated uptake of APOE-containing lipoproteins by cells. The sequence is that of Apolipoprotein E (APOE) from Oryctolagus cuniculus (Rabbit).